Reading from the N-terminus, the 287-residue chain is Ribosomal RNA small subunit methyltransferase A (287 aa).

S-adenosyl-L-methionine is bound by residues Asn-28, Leu-30, Gly-55, Glu-77, Asp-103, and Asn-123.

This sequence belongs to the class I-like SAM-binding methyltransferase superfamily. rRNA adenine N(6)-methyltransferase family. RsmA subfamily.

The protein resides in the cytoplasm. The catalysed reaction is adenosine(1518)/adenosine(1519) in 16S rRNA + 4 S-adenosyl-L-methionine = N(6)-dimethyladenosine(1518)/N(6)-dimethyladenosine(1519) in 16S rRNA + 4 S-adenosyl-L-homocysteine + 4 H(+). Specifically dimethylates two adjacent adenosines (A1518 and A1519) in the loop of a conserved hairpin near the 3'-end of 16S rRNA in the 30S particle. May play a critical role in biogenesis of 30S subunits. This Rhodopseudomonas palustris (strain HaA2) protein is Ribosomal RNA small subunit methyltransferase A.